We begin with the raw amino-acid sequence, 373 residues long: tRNA-specific 2-thiouridylase MnmA (373 aa).

Residues Gly-12–Ser-19 and Met-38 each bind ATP. An interaction with target base in tRNA region spans residues Asn-98–Asp-100. Cys-103 functions as the Nucleophile in the catalytic mechanism. An intrachain disulfide couples Cys-103 to Cys-200. Gly-127 provides a ligand contact to ATP. An interaction with tRNA region spans residues Lys-150–Gln-152. Cys-200 (cysteine persulfide intermediate) is an active-site residue. The tract at residues Arg-312–Tyr-313 is interaction with tRNA.

It belongs to the MnmA/TRMU family.

Its subcellular location is the cytoplasm. The catalysed reaction is S-sulfanyl-L-cysteinyl-[protein] + uridine(34) in tRNA + AH2 + ATP = 2-thiouridine(34) in tRNA + L-cysteinyl-[protein] + A + AMP + diphosphate + H(+). Catalyzes the 2-thiolation of uridine at the wobble position (U34) of tRNA, leading to the formation of s(2)U34. This chain is tRNA-specific 2-thiouridylase MnmA, found in Streptococcus mutans serotype c (strain ATCC 700610 / UA159).